A 159-amino-acid chain; its full sequence is Pathogenesis-related leaf protein 6 (159 aa).

An N-terminal signal peptide occupies residues 1 to 24 (MGLFNISLLLTCLMVLAIFHSCEA). At Q25 the chain carries Pyrrolidone carboxylic acid. Residues 32–147 (LAVHNDARAQ…NGWWFISCNY (116 aa)) enclose the SCP domain. 3 disulfides stabilise this stretch: C68/C136, C109/C115, and C131/C145.

The protein belongs to the CRISP family.

Probably involved in the defense reaction of plants against pathogens. Has antifungal activity. The chain is Pathogenesis-related leaf protein 6 (PR1B1) from Solanum lycopersicum (Tomato).